The chain runs to 502 residues: Smr domain-containing protein C1235.03 (502 aa).

The interval 150–184 (LITSNIGHRSRQRKKKTKKATNSRKPLSKFQSNTE) is disordered. The segment covering 157 to 171 (HRSRQRKKKTKKATN) has biased composition (basic residues). The Smr domain occupies 411 to 459 (SLDLHGATVREAKTIVRERVAAWWAKEADTSPNSIRPFVIVTGRGNHSI).

It localises to the nucleus. The protein resides in the nucleolus. The sequence is that of Smr domain-containing protein C1235.03 from Schizosaccharomyces pombe (strain 972 / ATCC 24843) (Fission yeast).